The sequence spans 136 residues: Acidic phospholipase A2 CC-PLA2-2 (136 aa).

Residues 1-16 (MRTLWIVAVWLMGVEG) form the signal peptide. Disulfide bonds link Cys42-Cys129, Cys44-Cys60, Cys59-Cys109, Cys65-Cys136, Cys66-Cys102, Cys73-Cys95, and Cys90-Cys100. Ca(2+) contacts are provided by Tyr43, Gly45, and Gly47. Residue His63 is part of the active site. Ca(2+) is bound at residue Asp64. Asp103 is an active-site residue.

Belongs to the phospholipase A2 family. Group II subfamily. D49 sub-subfamily. Ca(2+) is required as a cofactor. In terms of processing, glycosylated (2.5%). In terms of tissue distribution, expressed by the venom gland.

It is found in the secreted. The catalysed reaction is a 1,2-diacyl-sn-glycero-3-phosphocholine + H2O = a 1-acyl-sn-glycero-3-phosphocholine + a fatty acid + H(+). In terms of biological role, snake venom phospholipase A2 that inhibits blood coagulation and platelet aggregation induced by ADP and arachidonic acid. Inhibits tumor cell adhesion and migration in a dose-dependent manner. Abolishes the attachment of human brain microvascular endothelial cells (HBMEC) to fibrinogen (IC(50)=0.2 uM) and dramatically reduces its adhesion to fibronectin (IC(50)=0.3 uM), whereas no effect is observed on type I collagen, vitronectin or laminin 1. Also blocks the cell migration toward fibronectin and fibrinogen. These effects are not dependent of the catalytic activity, but are mediated by alpha-5/beta-1 (ITGA5/ITGB1) and alpha-v-containing (ITGAV) integrins. Also shows anti-angiogenic activity in chicken chorioallantoix membrane assay. Has a relatively high enzymatic activity. PLA2 catalyzes the calcium-dependent hydrolysis of the 2-acyl groups in 3-sn-phosphoglycerides. This is Acidic phospholipase A2 CC-PLA2-2 from Cerastes cerastes (Horned desert viper).